A 143-amino-acid polypeptide reads, in one-letter code: Large-conductance mechanosensitive channel (143 aa).

3 consecutive transmembrane segments (helical) span residues 10–30 (FAIKGNMMDLAIGVIIGGAFG), 40–60 (IIMPLITVITGGGVDFSQKFI), and 86–106 (GNFLTILINFLILAWVVFLMV).

It belongs to the MscL family. Homopentamer.

The protein resides in the cell inner membrane. Functionally, channel that opens in response to stretch forces in the membrane lipid bilayer. May participate in the regulation of osmotic pressure changes within the cell. This is Large-conductance mechanosensitive channel from Acinetobacter baumannii (strain ATCC 17978 / DSM 105126 / CIP 53.77 / LMG 1025 / NCDC KC755 / 5377).